Here is a 253-residue protein sequence, read N- to C-terminus: MDIIIRADAQEVGKEAAAIMAPFIKQGRTIGLATGSSPLTTYRELIRMYESGELTFKTIQAFLLDEYVGLARDDKNSYFRTIRDEFTAHVDFVDANVHSPDSTDPDPYHAAALYEQKIIDTGVAIQLLGVGVNGHIGFNEPTSALQGPTKVQALHPQTIKDNARFFNDCIENVPTHAMTQGLGTITRAENIIMVATGEAKADAIHRIVEGPLTALCPGSVLQLHADVTIVVDEAAASKLEHADYYRTMERIRL.

Catalysis depends on aspartate 65, which acts as the Proton acceptor; for enolization step. The active-site For ring-opening step is asparagine 133. Histidine 135 functions as the Proton acceptor; for ring-opening step in the catalytic mechanism. The active-site For ring-opening step is the glutamate 140.

The protein belongs to the glucosamine/galactosamine-6-phosphate isomerase family. NagB subfamily.

It catalyses the reaction alpha-D-glucosamine 6-phosphate + H2O = beta-D-fructose 6-phosphate + NH4(+). Its pathway is amino-sugar metabolism; N-acetylneuraminate degradation; D-fructose 6-phosphate from N-acetylneuraminate: step 5/5. Its function is as follows. Catalyzes the reversible isomerization-deamination of glucosamine 6-phosphate (GlcN6P) to form fructose 6-phosphate (Fru6P) and ammonium ion. The chain is Glucosamine-6-phosphate deaminase from Corynebacterium efficiens (strain DSM 44549 / YS-314 / AJ 12310 / JCM 11189 / NBRC 100395).